Here is an 85-residue protein sequence, read N- to C-terminus: Cell division topological specificity factor (85 aa).

Belongs to the MinE family.

Prevents the cell division inhibition by proteins MinC and MinD at internal division sites while permitting inhibition at polar sites. This ensures cell division at the proper site by restricting the formation of a division septum at the midpoint of the long axis of the cell. This chain is Cell division topological specificity factor, found in Thioalkalivibrio sulfidiphilus (strain HL-EbGR7).